Here is a 98-residue protein sequence, read N- to C-terminus: NADH-ubiquinone oxidoreductase chain 4L (98 aa).

The next 3 membrane-spanning stretches (helical) occupy residues Pro2–Phe22, Ser29–Leu49, and Ile61–Val81.

The protein belongs to the complex I subunit 4L family. As to quaternary structure, core subunit of respiratory chain NADH dehydrogenase (Complex I) which is composed of 45 different subunits.

The protein localises to the mitochondrion inner membrane. It carries out the reaction a ubiquinone + NADH + 5 H(+)(in) = a ubiquinol + NAD(+) + 4 H(+)(out). Functionally, core subunit of the mitochondrial membrane respiratory chain NADH dehydrogenase (Complex I) which catalyzes electron transfer from NADH through the respiratory chain, using ubiquinone as an electron acceptor. Part of the enzyme membrane arm which is embedded in the lipid bilayer and involved in proton translocation. This chain is NADH-ubiquinone oxidoreductase chain 4L (MT-ND4L), found in Hapalemur aureus (Golden bamboo lemur).